We begin with the raw amino-acid sequence, 505 residues long: MSTRTARPLGPQLALAGTVGKRVDVLVIGLTSSSDGPEIALGDGIVDEAVLTGLLDTLVAVGASGKAEETTRIPAPDTLPVDSVLAVGLGSAEKLDAEQIRKSAGAAARTLSGVGTAATTLSVLDLGAAAEGFALGAYRFTEFKSAKSAPGPDAQPVARVELLVSSPRAKESKDTLARSAAIAEAVATAREFVNTPPSHLFPAEFADRAKELGTDSGLKVEVLDEKALEKNGYGGILGVGKGSSRLPRLVRLSYSAKKRNAPKVALVGKGITFDTGGISIKPAAGMENMTSDMGGAAAVVATVVLAAKLGLPVDVTATVPMAENMPSSTAQRPGDVLTQYGGTTVEVINTDAEGRLVLADAIVRACEDDPDYLIDTATLTGAQMVALGNRTPGVMGTDAFRDRVAAISQEIGENAWAMPMPAELRSDLDSKIADLANVTNHRWGGMLAAALYLKEFVADGVQWAHIDVAGPAYNSSGPWGYTGRGGTGVPVRTMISVIEDIAAHG.

Mn(2+) contacts are provided by Lys-269 and Asp-274. Lys-281 is an active-site residue. The Mn(2+) site is built by Asp-292, Asp-351, and Glu-353. Arg-355 is an active-site residue.

The protein belongs to the peptidase M17 family. The cofactor is Mn(2+).

The protein resides in the cytoplasm. The enzyme catalyses Release of an N-terminal amino acid, Xaa-|-Yaa-, in which Xaa is preferably Leu, but may be other amino acids including Pro although not Arg or Lys, and Yaa may be Pro. Amino acid amides and methyl esters are also readily hydrolyzed, but rates on arylamides are exceedingly low.. It carries out the reaction Release of an N-terminal amino acid, preferentially leucine, but not glutamic or aspartic acids.. Presumably involved in the processing and regular turnover of intracellular proteins. Catalyzes the removal of unsubstituted N-terminal amino acids from various peptides. This is Probable cytosol aminopeptidase from Rhodococcus opacus (strain B4).